The primary structure comprises 74 residues: Exodeoxyribonuclease 7 small subunit (74 aa).

It belongs to the XseB family. Heterooligomer composed of large and small subunits.

It localises to the cytoplasm. The catalysed reaction is Exonucleolytic cleavage in either 5'- to 3'- or 3'- to 5'-direction to yield nucleoside 5'-phosphates.. Its function is as follows. Bidirectionally degrades single-stranded DNA into large acid-insoluble oligonucleotides, which are then degraded further into small acid-soluble oligonucleotides. The polypeptide is Exodeoxyribonuclease 7 small subunit (Ruthia magnifica subsp. Calyptogena magnifica).